The chain runs to 119 residues: Large ribosomal subunit protein uL18 (119 aa).

Belongs to the universal ribosomal protein uL18 family. In terms of assembly, part of the 50S ribosomal subunit; part of the 5S rRNA/L5/L18/L25 subcomplex. Contacts the 5S and 23S rRNAs.

In terms of biological role, this is one of the proteins that bind and probably mediate the attachment of the 5S RNA into the large ribosomal subunit, where it forms part of the central protuberance. The chain is Large ribosomal subunit protein uL18 from Xanthomonas oryzae pv. oryzae (strain PXO99A).